A 132-amino-acid polypeptide reads, in one-letter code: Small ribosomal subunit protein uS8 (132 aa).

Belongs to the universal ribosomal protein uS8 family. Part of the 30S ribosomal subunit. Contacts proteins S5 and S12.

Its function is as follows. One of the primary rRNA binding proteins, it binds directly to 16S rRNA central domain where it helps coordinate assembly of the platform of the 30S subunit. This Lactobacillus helveticus (strain DPC 4571) protein is Small ribosomal subunit protein uS8.